A 188-amino-acid chain; its full sequence is Elongation factor P (188 aa).

Belongs to the elongation factor P family.

It is found in the cytoplasm. Its pathway is protein biosynthesis; polypeptide chain elongation. Involved in peptide bond synthesis. Stimulates efficient translation and peptide-bond synthesis on native or reconstituted 70S ribosomes in vitro. Probably functions indirectly by altering the affinity of the ribosome for aminoacyl-tRNA, thus increasing their reactivity as acceptors for peptidyl transferase. This Acidiphilium cryptum (strain JF-5) protein is Elongation factor P.